Consider the following 432-residue polypeptide: Adenylosuccinate synthetase (432 aa).

Residues 13-19 (GDEGKGK) and 41-43 (GHT) contribute to the GTP site. Asp-14 functions as the Proton acceptor in the catalytic mechanism. Asp-14 and Gly-41 together coordinate Mg(2+). IMP-binding positions include 14–17 (DEGK), 39–42 (NAGH), Thr-130, Arg-144, Gln-225, Thr-240, and Arg-304. The active-site Proton donor is His-42. 300-306 (ATTGRRR) serves as a coordination point for substrate. Residues Arg-306, 332-334 (KLD), and 415-417 (STG) contribute to the GTP site.

This sequence belongs to the adenylosuccinate synthetase family. In terms of assembly, homodimer. The cofactor is Mg(2+).

The protein localises to the cytoplasm. It catalyses the reaction IMP + L-aspartate + GTP = N(6)-(1,2-dicarboxyethyl)-AMP + GDP + phosphate + 2 H(+). Its pathway is purine metabolism; AMP biosynthesis via de novo pathway; AMP from IMP: step 1/2. Functionally, plays an important role in the de novo pathway of purine nucleotide biosynthesis. Catalyzes the first committed step in the biosynthesis of AMP from IMP. In Serratia proteamaculans (strain 568), this protein is Adenylosuccinate synthetase.